We begin with the raw amino-acid sequence, 198 residues long: MAMATSMSLNLIGAFKGLSLSSTSSFLRGDLSFSPKTSFTVTLPLENLQAPIPLTIESAHKKGAGSTKNGRDSPGQRLGVKIYGDQVAKPGAIIVRQRGTKFHAGKNVGIGKDHTIFSLIDGLVKFEKFGPDRKKISVYPREIVPENPNSYRARKRENFRLQREKKKARRENYSYTLPTPELVLASASVDDAEANPEC.

The transit peptide at 1–58 directs the protein to the chloroplast; that stretch reads MAMATSMSLNLIGAFKGLSLSSTSSFLRGDLSFSPKTSFTVTLPLENLQAPIPLTIES.

It belongs to the bacterial ribosomal protein bL27 family. Part of the 50S ribosomal subunit.

The protein resides in the plastid. The protein localises to the chloroplast. The polypeptide is Large ribosomal subunit protein bL27c (RPL27) (Arabidopsis thaliana (Mouse-ear cress)).